The following is a 101-amino-acid chain: Small ribosomal subunit protein uS14 (101 aa).

Belongs to the universal ribosomal protein uS14 family. Part of the 30S ribosomal subunit. Contacts proteins S3 and S10.

In terms of biological role, binds 16S rRNA, required for the assembly of 30S particles and may also be responsible for determining the conformation of the 16S rRNA at the A site. This Ehrlichia ruminantium (strain Welgevonden) protein is Small ribosomal subunit protein uS14.